The sequence spans 417 residues: Hydroxysteroid dehydrogenase-like protein 2 (417 aa).

NADP(+)-binding positions include G17–G23, K42, and D74. Y168 (proton acceptor) is an active-site residue. NADP(+) is bound at residue K172. Residues A306–N414 enclose the SCP2 domain.

This sequence belongs to the short-chain dehydrogenases/reductases (SDR) family.

Its subcellular location is the peroxisome. It localises to the mitochondrion. Its function is as follows. Has apparently no steroid dehydrogenase activity. Might act as a metabolic regulator that affects systemic adaptation to nutritional cues. The protein is Hydroxysteroid dehydrogenase-like protein 2 (hsdl2) of Xenopus laevis (African clawed frog).